Reading from the N-terminus, the 303-residue chain is Coenzyme PQQ synthesis protein B (303 aa).

Belongs to the PqqB family.

The protein operates within cofactor biosynthesis; pyrroloquinoline quinone biosynthesis. Its function is as follows. May be involved in the transport of PQQ or its precursor to the periplasm. The chain is Coenzyme PQQ synthesis protein B from Pseudomonas fluorescens (strain SBW25).